Reading from the N-terminus, the 276-residue chain is Dermonecrotic toxin LlSicTox-alphaIV2iii (276 aa).

Histidine 5 is a catalytic residue. Mg(2+)-binding residues include glutamate 25 and aspartate 27. Histidine 41 serves as the catalytic Nucleophile. 2 disulfides stabilise this stretch: cysteine 45–cysteine 51 and cysteine 47–cysteine 193. Aspartate 85 contributes to the Mg(2+) binding site.

The protein belongs to the arthropod phospholipase D family. Class II subfamily. Mg(2+) is required as a cofactor. Expressed by the venom gland.

Its subcellular location is the secreted. It carries out the reaction an N-(acyl)-sphingosylphosphocholine = an N-(acyl)-sphingosyl-1,3-cyclic phosphate + choline. It catalyses the reaction an N-(acyl)-sphingosylphosphoethanolamine = an N-(acyl)-sphingosyl-1,3-cyclic phosphate + ethanolamine. The enzyme catalyses a 1-acyl-sn-glycero-3-phosphocholine = a 1-acyl-sn-glycero-2,3-cyclic phosphate + choline. The catalysed reaction is a 1-acyl-sn-glycero-3-phosphoethanolamine = a 1-acyl-sn-glycero-2,3-cyclic phosphate + ethanolamine. In terms of biological role, dermonecrotic toxins cleave the phosphodiester linkage between the phosphate and headgroup of certain phospholipids (sphingolipid and lysolipid substrates), forming an alcohol (often choline) and a cyclic phosphate. This toxin acts on sphingomyelin (SM). It may also act on ceramide phosphoethanolamine (CPE), lysophosphatidylcholine (LPC) and lysophosphatidylethanolamine (LPE), but not on lysophosphatidylserine (LPS), and lysophosphatidylglycerol (LPG). It acts by transphosphatidylation, releasing exclusively cyclic phosphate products as second products. Induces dermonecrosis, hemolysis, increased vascular permeability, edema, inflammatory response, and platelet aggregation. The protein is Dermonecrotic toxin LlSicTox-alphaIV2iii of Loxosceles laeta (South American recluse spider).